The following is an 834-amino-acid chain: Glycerol-3-phosphate acyltransferase (834 aa).

The HXXXXD motif motif lies at 309–314; it reads CHRSHI.

Belongs to the GPAT/DAPAT family.

Its subcellular location is the cell inner membrane. It carries out the reaction sn-glycerol 3-phosphate + an acyl-CoA = a 1-acyl-sn-glycero-3-phosphate + CoA. The protein operates within phospholipid metabolism; CDP-diacylglycerol biosynthesis; CDP-diacylglycerol from sn-glycerol 3-phosphate: step 1/3. This chain is Glycerol-3-phosphate acyltransferase, found in Pseudomonas fluorescens (strain Pf0-1).